The primary structure comprises 233 residues: Large ribosomal subunit protein uL1 (233 aa).

It belongs to the universal ribosomal protein uL1 family. Part of the 50S ribosomal subunit.

In terms of biological role, binds directly to 23S rRNA. The L1 stalk is quite mobile in the ribosome, and is involved in E site tRNA release. Its function is as follows. Protein L1 is also a translational repressor protein, it controls the translation of the L11 operon by binding to its mRNA. The polypeptide is Large ribosomal subunit protein uL1 (Rhizobium etli (strain CIAT 652)).